Consider the following 315-residue polypeptide: ADP/ATP translocase (315 aa).

At 1 to 13 the chain is on the mitochondrial intermembrane side; it reads MSNKQETKILGMP. 2 Solcar repeats span residues 13–106 and 118–210; these read PPFV…FKAM and KWMA…IKPV. A helical transmembrane segment spans residues 14-37; it reads PFVVDFLMGGVSAAVSKTAAAPIE. Lys-30 lines the bongkrekate pocket. At 38–80 the chain is on the mitochondrial matrix side; sequence RIKLLVQNQDEMIKAGRLDRRYNGIIDCFRRTTADEGLMALWR. A cardiolipin is bound by residues Ile-62 and 81–83; that span reads GNT. A helical membrane pass occupies residues 81–104; the sequence is GNTANVIRYFPTQALNFAFRDKFK. Arg-88 serves as a coordination point for ADP. Bongkrekate is bound by residues 88-89 and Asn-96; that span reads RY. Residues 105–115 lie on the Mitochondrial intermembrane side of the membrane; sequence AMFGYKKDKDG. The helical transmembrane segment at 116-145 threads the bilayer; that stretch reads YAKWMAGNLASGGAAGATSLLFVYSLDYAR. Residues 146–184 lie on the Mitochondrial matrix side of the membrane; it reads TRLANDAKSAKGGGARQFNGLIDVYRKTLASDGIAGLYR. Residues Leu-166 and 184-185 contribute to the a cardiolipin site; that span reads RG. A helical transmembrane segment spans residues 185-213; the sequence is GFGPSVAGIVVYRGLYFGMYDSIKPVVLV. 196-197 contributes to the bongkrekate binding site; sequence YR. Over 214–216 the chain is Mitochondrial intermembrane; the sequence is GPL. A helical membrane pass occupies residues 217-242; sequence ANNFLASFLLGWCVTTGAGIASYPLD. A Solcar repeat occupies 218–304; it reads NNFLASFLLG…LSIYDQLQIL (87 aa). Residues 243-283 lie on the Mitochondrial matrix side of the membrane; that stretch reads TVRRRMMMTSGEAVKYKSSIDAFRQIIAKEGVKSLFKGAGA. Arg-245 provides a ligand contact to ADP. Residues 245-250 carry the Nucleotide carrier signature motif motif; that stretch reads RRRMMM. A cardiolipin is bound by residues 260–261 and 280–282; these read SS and GAG. A helical membrane pass occupies residues 284–304; it reads NILRGVAGAGVLSIYDQLQIL. The Mitochondrial intermembrane portion of the chain corresponds to 305 to 315; the sequence is LFGKAFKGGSG.

The protein belongs to the mitochondrial carrier (TC 2.A.29) family. In terms of assembly, monomer.

It is found in the mitochondrion inner membrane. The catalysed reaction is ADP(in) + ATP(out) = ADP(out) + ATP(in). Its activity is regulated as follows. The matrix-open state (m-state) is inhibited by the membrane-permeable bongkrekic acid (BKA). The cytoplasmic-open state (c-state) is inhibited by the membrane-impermeable toxic inhibitor carboxyatractyloside (CATR). Its function is as follows. ADP:ATP antiporter that mediates import of ADP into the mitochondrial matrix for ATP synthesis, and export of ATP out to fuel the cell. Cycles between the cytoplasmic-open state (c-state) and the matrix-open state (m-state): operates by the alternating access mechanism with a single substrate-binding site intermittently exposed to either the cytosolic (c-state) or matrix (m-state) side of the inner mitochondrial membrane. The protein is ADP/ATP translocase of Thermothelomyces thermophilus (strain ATCC 42464 / BCRC 31852 / DSM 1799) (Sporotrichum thermophile).